A 247-amino-acid chain; its full sequence is Pyridoxine 5'-phosphate synthase (247 aa).

3-amino-2-oxopropyl phosphate is bound at residue Asn7. 9–10 lines the 1-deoxy-D-xylulose 5-phosphate pocket; the sequence is DH. Arg18 contacts 3-amino-2-oxopropyl phosphate. The active-site Proton acceptor is the His43. Residues Arg45 and His50 each contribute to the 1-deoxy-D-xylulose 5-phosphate site. Residue Glu70 is the Proton acceptor of the active site. A 1-deoxy-D-xylulose 5-phosphate-binding site is contributed by Thr100. Residue His190 is the Proton donor of the active site. Residues Gly191 and 212–213 contribute to the 3-amino-2-oxopropyl phosphate site; that span reads GH.

Belongs to the PNP synthase family. As to quaternary structure, homooctamer; tetramer of dimers.

Its subcellular location is the cytoplasm. The enzyme catalyses 3-amino-2-oxopropyl phosphate + 1-deoxy-D-xylulose 5-phosphate = pyridoxine 5'-phosphate + phosphate + 2 H2O + H(+). Its pathway is cofactor biosynthesis; pyridoxine 5'-phosphate biosynthesis; pyridoxine 5'-phosphate from D-erythrose 4-phosphate: step 5/5. Catalyzes the complicated ring closure reaction between the two acyclic compounds 1-deoxy-D-xylulose-5-phosphate (DXP) and 3-amino-2-oxopropyl phosphate (1-amino-acetone-3-phosphate or AAP) to form pyridoxine 5'-phosphate (PNP) and inorganic phosphate. The protein is Pyridoxine 5'-phosphate synthase of Synechococcus sp. (strain WH7803).